Reading from the N-terminus, the 504-residue chain is Apolipoprotein N-acyltransferase (504 aa).

Helical transmembrane passes span 6-26 (LALTGGILLPFAFAPFGYALV), 47-67 (ALYGYLFGLGQFGIGVSWVFV), 83-103 (LTALFVAYLALFPALAGWLGV), 105-125 (AGGGSILVRTLLVFPAAWVVT), 153-173 (IAPVFGVFGVGWLLAVLAGLL), and 186-206 (FALLGAAVVLVGSTQFAKVQW). Residues 219–457 (LQGNVPQDQK…REALTGMMQP (239 aa)) form the CN hydrolase domain. The active-site Proton acceptor is E258. K317 is a catalytic residue. C369 (nucleophile) is an active-site residue. A helical membrane pass occupies residues 465-485 (ALWGDWPAIGLCAGIVGICFA).

Belongs to the CN hydrolase family. Apolipoprotein N-acyltransferase subfamily.

The protein localises to the cell inner membrane. The enzyme catalyses N-terminal S-1,2-diacyl-sn-glyceryl-L-cysteinyl-[lipoprotein] + a glycerophospholipid = N-acyl-S-1,2-diacyl-sn-glyceryl-L-cysteinyl-[lipoprotein] + a 2-acyl-sn-glycero-3-phospholipid + H(+). It participates in protein modification; lipoprotein biosynthesis (N-acyl transfer). Functionally, catalyzes the phospholipid dependent N-acylation of the N-terminal cysteine of apolipoprotein, the last step in lipoprotein maturation. The chain is Apolipoprotein N-acyltransferase from Methylococcus capsulatus (strain ATCC 33009 / NCIMB 11132 / Bath).